The following is a 427-amino-acid chain: Adenylosuccinate synthetase (427 aa).

Residues Gly12 to Lys18 and Gly40 to Thr42 contribute to the GTP site. Asp13 functions as the Proton acceptor in the catalytic mechanism. Asp13 and Gly40 together coordinate Mg(2+). Residues Asp13 to Lys16, Asn38 to His41, Thr128, Arg142, Gln223, Thr238, and Arg302 each bind IMP. His41 acts as the Proton donor in catalysis. Thr298 to Arg304 is a substrate binding site. Residues Arg304, Lys330–Asp332, and Gly412–Gly414 contribute to the GTP site.

This sequence belongs to the adenylosuccinate synthetase family. As to quaternary structure, homodimer. Mg(2+) serves as cofactor.

The protein localises to the cytoplasm. The enzyme catalyses IMP + L-aspartate + GTP = N(6)-(1,2-dicarboxyethyl)-AMP + GDP + phosphate + 2 H(+). It functions in the pathway purine metabolism; AMP biosynthesis via de novo pathway; AMP from IMP: step 1/2. Plays an important role in the de novo pathway of purine nucleotide biosynthesis. Catalyzes the first committed step in the biosynthesis of AMP from IMP. The chain is Adenylosuccinate synthetase from Pelotomaculum thermopropionicum (strain DSM 13744 / JCM 10971 / SI).